The chain runs to 228 residues: Transcription factor zip-11 (228 aa).

The segment at 166 to 202 (RKRQQNKVAAARYRDKQKAKWQDLLDQLEAEEDRNQR) is basic motif. One can recognise a bZIP domain in the interval 166 to 224 (RKRQQNKVAAARYRDKQKAKWQDLLDQLEAEEDRNQRLKLQAGHLEKEVAEMRQAFLAK). Positions 203 to 210 (LKLQAGHL) are leucine-zipper.

This sequence belongs to the bZIP family. Interacts with CCAAT/enhancer-binding protein cebp-2.

The protein resides in the nucleus. In terms of biological role, transcription factor. Involved in modulating innate immune response pathways, acting to promote resistance against infection by Gram-negative bacterium P.aeruginosa strain PA14. May act as part of a feedback regulatory loop with the pmk-1/p38 MAPK pathway. May also function in concert with CCAAT/enhancer-binding protein cebp-2 to mediate immune responses, independently of the pmk-1/p38 MAPK pathway. In Caenorhabditis elegans, this protein is Transcription factor zip-11.